We begin with the raw amino-acid sequence, 799 residues long: ATP-dependent DNA helicase Hel308 (799 aa).

ATP-binding positions include glutamine 29 and 47 to 54 (IPTASGKT). The Helicase ATP-binding domain occupies 34–200 (EAGVTEGENL…WLDAGLVDSD (167 aa)). Positions 145-148 (DEVH) match the DEAH box motif. Residues 234–435 (QTAAIVRDTL…EPALRTHILA (202 aa)) form the Helicase C-terminal domain. 2 disordered regions span residues 522–566 (RGAS…DRDP) and 750–799 (NVLE…LGDF). Residues 553–566 (LAEDADESDADRDP) show a composition bias toward acidic residues.

Belongs to the helicase family. Hel308 subfamily. In terms of assembly, monomer.

It carries out the reaction Couples ATP hydrolysis with the unwinding of duplex DNA by translocating in the 3'-5' direction.. The enzyme catalyses ATP + H2O = ADP + phosphate + H(+). In terms of biological role, DNA-dependent ATPase and 3'-5' DNA helicase that may be involved in repair of stalled replication forks. This Haloarcula marismortui (strain ATCC 43049 / DSM 3752 / JCM 8966 / VKM B-1809) (Halobacterium marismortui) protein is ATP-dependent DNA helicase Hel308.